We begin with the raw amino-acid sequence, 145 residues long: Ribonuclease H (145 aa).

In terms of domain architecture, RNase H type-1 spans 1–141 (MQEVELFTDG…VDELANQAMD (141 aa)). Mg(2+) contacts are provided by Asp-9, Glu-47, Asp-69, and Asp-133.

This sequence belongs to the RNase H family. As to quaternary structure, monomer. Mg(2+) serves as cofactor.

It is found in the cytoplasm. It carries out the reaction Endonucleolytic cleavage to 5'-phosphomonoester.. Its function is as follows. Endonuclease that specifically degrades the RNA of RNA-DNA hybrids. This is Ribonuclease H from Hydrogenovibrio crunogenus (strain DSM 25203 / XCL-2) (Thiomicrospira crunogena).